The chain runs to 330 residues: Spondin-2 (330 aa).

The N-terminal stretch at 1-25 (MENVSFSLDRTLWVFLLAMLGSTAG) is a signal peptide. The 191-residue stretch at 30–220 (GESVCTARPL…EITASSPSHP (191 aa)) folds into the Spondin domain. Cysteines 34 and 170 form a disulfide. Residue glutamate 140 coordinates a divalent metal cation. Ca(2+) is bound by residues aspartate 159, aspartate 187, and aspartate 191. The TSP type-1 domain maps to 276-330 (DCEVSLWSSWGLCGGPCGKLGAKSRTRYVRVQPANNGTPCPELEEEAECAPDNCV). C-linked (Man) tryptophan glycosylation is present at tryptophan 282.

In terms of assembly, monomer. Interacts with integrin. As to expression, abundantly expressed in the developing hippocampus.

Its subcellular location is the secreted. It is found in the extracellular space. It localises to the extracellular matrix. In terms of biological role, cell adhesion protein that promotes adhesion and outgrowth of hippocampal embryonic neurons. Binds directly to bacteria and their components and functions as an opsonin for macrophage phagocytosis of bacteria. Essential in the initiation of the innate immune response and represents a unique pattern-recognition molecule in the ECM for microbial pathogens. The protein is Spondin-2 (Spon2) of Rattus norvegicus (Rat).